A 220-amino-acid polypeptide reads, in one-letter code: 14-3-3-like protein (220 aa).

Belongs to the 14-3-3 family.

The sequence is that of 14-3-3-like protein from Spinacia oleracea (Spinach).